Consider the following 324-residue polypeptide: Probable RuBisCO transcriptional regulator (324 aa).

The region spanning 8–65 is the HTH lysR-type domain; that stretch reads FSLEQLRILKAIATEGSFKKAAESLYMTQPAISLQIQTLEKKLNIALFDRSGRRALMT. Residues 25–44 constitute a DNA-binding region (H-T-H motif); it reads FKKAAESLYMTQPAISLQIQ.

Belongs to the LysR transcriptional regulatory family.

Its subcellular location is the plastid. It is found in the cyanelle. Trans-acting transcriptional regulator of RuBisCO genes (rbcL and rbcS) expression. This Cyanophora paradoxa protein is Probable RuBisCO transcriptional regulator (rbcR).